We begin with the raw amino-acid sequence, 484 residues long: 1,4-beta-D-glucan cellobiohydrolase CEL6A (484 aa).

The signal sequence occupies residues 1–17; sequence MAKRLLLTAALAATTLA. A CBM1 domain is found at 26 to 62; it reads NCGSVWSQCGGQGWTGATCCASGSTCVAQNQWYSQCL. Intrachain disulfides connect Cys34–Cys51 and Cys45–Cys61. Residues 68 to 98 are disordered; sequence TTTAQAPSSTRTTTSSSSRPTSSSISTSAVN. Substrate is bound by residues Trp171 and Asp173. N-linked (GlcNAc...) asparagine glycosylation occurs at Asn175. Residues 208–230 form a substrate binding loop 1 region; sequence YDLPDRDCAAAASNGEWAIADGG. Residue Asp260 is the Proton donor of the active site. Substrate contacts are provided by His305, Trp308, Asn344, Trp405, Lys433, and Glu437. The substrate binding loop 2 stretch occupies residues 431-469; that stretch reads WIKPGGECDGTSDTTAARYDHHCGFADALKPAPEAGQWF. The active-site Proton acceptor is Asp439.

This sequence belongs to the glycosyl hydrolase 6 (cellulase B) family. In terms of assembly, monomer. Post-translationally, both N- and O-glycosylated.

It localises to the secreted. The enzyme catalyses Hydrolysis of (1-&gt;4)-beta-D-glucosidic linkages in cellulose and cellotetraose, releasing cellobiose from the non-reducing ends of the chains.. Functionally, exoglucanase that plays an important function in biomass degradation by catalyzing the hydrolysis of the non-reducing end beta-1,4-glucosidic linkages in cellulose and cellotetraose to release cellobiose. Hydrolyzes crystalline and amorphous cellulose but is inactive on hydroxyethyl cellulose, mannan, galactomannan, xyloglucan, arabinoxylan, arabinan, xylan, and pectin. This is 1,4-beta-D-glucan cellobiohydrolase CEL6A from Podospora anserina (strain S / ATCC MYA-4624 / DSM 980 / FGSC 10383) (Pleurage anserina).